A 279-amino-acid polypeptide reads, in one-letter code: Diaminopimelate epimerase (279 aa).

Residues Asn11 and Asn64 each contribute to the substrate site. Cys73 functions as the Proton donor in the catalytic mechanism. Substrate contacts are provided by residues 74–75, Asn170, and 187–188; these read GN and ER. Cys196 acts as the Proton acceptor in catalysis. Residue 197–198 participates in substrate binding; sequence GS. The segment at 255–279 is disordered; the sequence is NTDHQRRRHSLSRSPSGRPRLQECR.

The protein belongs to the diaminopimelate epimerase family. In terms of assembly, homodimer.

It is found in the cytoplasm. It carries out the reaction (2S,6S)-2,6-diaminopimelate = meso-2,6-diaminopimelate. The protein operates within amino-acid biosynthesis; L-lysine biosynthesis via DAP pathway; DL-2,6-diaminopimelate from LL-2,6-diaminopimelate: step 1/1. Catalyzes the stereoinversion of LL-2,6-diaminopimelate (L,L-DAP) to meso-diaminopimelate (meso-DAP), a precursor of L-lysine. In Methanopyrus kandleri (strain AV19 / DSM 6324 / JCM 9639 / NBRC 100938), this protein is Diaminopimelate epimerase.